A 196-amino-acid chain; its full sequence is Imidazoleglycerol-phosphate dehydratase (196 aa).

The protein belongs to the imidazoleglycerol-phosphate dehydratase family.

It localises to the cytoplasm. The catalysed reaction is D-erythro-1-(imidazol-4-yl)glycerol 3-phosphate = 3-(imidazol-4-yl)-2-oxopropyl phosphate + H2O. The protein operates within amino-acid biosynthesis; L-histidine biosynthesis; L-histidine from 5-phospho-alpha-D-ribose 1-diphosphate: step 6/9. The chain is Imidazoleglycerol-phosphate dehydratase from Clostridium botulinum (strain ATCC 19397 / Type A).